Reading from the N-terminus, the 897-residue chain is Echinoderm microtubule-associated protein-like 3 (897 aa).

Met1 carries the post-translational modification N-acetylmethionine. A coiled-coil region spans residues 16–43 (LQTLSQRLRVQEEEMELVKAALAEALRL). Residues 51 to 68 (TTLQGSGISAPTRNSSIT) show a composition bias toward polar residues. Residues 51-210 (TTLQGSGISA…GGPGSRRSNY (160 aa)) form a disordered region. Low complexity-rich tracts occupy residues 96–108 (PSSG…NGPP), 118–132 (SGTQ…SSGA), and 155–164 (RNSSSSSSPS). A compositionally biased stretch (polar residues) spans 175–190 (AASSANLLLRSGSTES). 3 positions are modified to phosphoserine: Ser177, Ser199, and Ser205. 13 WD repeats span residues 235–287 (RSLE…LYRP), 296–345 (GGGQ…IWDS), 351–393 (LQEI…VWDC), 399–435 (LAEI…FWNW), 449–488 (RKQG…TWGR), 505–544 (YTIV…QWGP), 550–585 (QEAE…LRGD), 590–627 (FSPV…LWDG), 630–668 (HALA…VLDT), 675–710 (SDVT…IYSV), 717–756 (SSRF…YWDV), 766–824 (RYES…LFQY), and 831–870 (APSR…QWRV). The segment at 876 to 897 (SGPAPATPSRTPSLSPASSLDV) is disordered. The residue at position 882 (Thr882) is a Phosphothreonine; by CDK1. The span at 883-897 (PSRTPSLSPASSLDV) shows a compositional bias: polar residues. Ser884 is modified (phosphoserine).

The protein belongs to the WD repeat EMAP family. Homotrimer; self-association is mediated by the N-terminal coiled coil. Interacts with EML2 but not with EML1. Interacts (phosphorylated at Thr-882) with TUBG1, HAUS1, HAUS2, HAUS3, HAUS4, HAUS5, HAUS6, HAUS7 and HAUS8. In terms of processing, phosphorylation at Thr-882 during mitosis is required for interaction with TUBG1, HAUS1, HAUS2, HAUS3, HAUS4, HAUS5, HAUS6, HAUS7 and HAUS8 and their recruitment to spindle microtubules.

The protein localises to the cytoplasm. Its subcellular location is the cytoskeleton. It localises to the nucleus. The protein resides in the midbody. It is found in the spindle. Regulates mitotic spindle assembly, microtubule (MT)-kinetochore attachment and chromosome separation via recruitment of HAUS augmin-like complex and TUBG1 to the existing MTs and promoting MT-based MT nucleation. Required for proper alignnment of chromosomes during metaphase. This is Echinoderm microtubule-associated protein-like 3 (Eml3) from Mus musculus (Mouse).